The primary structure comprises 338 residues: Nucleoid-associated protein PM1885 (338 aa).

Belongs to the YejK family.

Its subcellular location is the cytoplasm. The protein localises to the nucleoid. The chain is Nucleoid-associated protein PM1885 from Pasteurella multocida (strain Pm70).